We begin with the raw amino-acid sequence, 339 residues long: D-erythrose-4-phosphate dehydrogenase (339 aa).

NAD(+) is bound at residue 11-12; sequence RI. Residues 153-155, Arg199, 212-213, and Arg235 each bind substrate; these read SCT and TK. Cys154 functions as the Nucleophile in the catalytic mechanism. Asn317 serves as a coordination point for NAD(+).

This sequence belongs to the glyceraldehyde-3-phosphate dehydrogenase family. Epd subfamily. Homotetramer.

It is found in the cytoplasm. The catalysed reaction is D-erythrose 4-phosphate + NAD(+) + H2O = 4-phospho-D-erythronate + NADH + 2 H(+). It functions in the pathway cofactor biosynthesis; pyridoxine 5'-phosphate biosynthesis; pyridoxine 5'-phosphate from D-erythrose 4-phosphate: step 1/5. Catalyzes the NAD-dependent conversion of D-erythrose 4-phosphate to 4-phosphoerythronate. The polypeptide is D-erythrose-4-phosphate dehydrogenase (Shewanella frigidimarina (strain NCIMB 400)).